Here is an 875-residue protein sequence, read N- to C-terminus: Lysine-specific demethylase JMJ26 (875 aa).

Residues 31-103 (KPVEATSLSS…RSSVKKRATT (73 aa)) form a disordered region. Residues 62–69 (RKRSKADE) carry the Nuclear localization signal motif. The span at 79 to 93 (KCDDENKCEENEKKQ) shows a compositional bias: basic and acidic residues. Zn(2+) is bound by residues Cys-193, Cys-196, Cys-207, Cys-210, Cys-216, Cys-219, Cys-236, Cys-239, Cys-322, Cys-325, Cys-339, and Cys-347. Residues 193–240 (CHQCSKGERRYLFICTFCEVRLYCFPCIKKWYPHLSTDDILEKCPFCR) form an RING-type; degenerate zinc finger. A B box-type; degenerate zinc finger spans residues 317–347 (EERVFCNHCATSIVDLHRSCPKCSYELCLNC). One can recognise a JmjC domain in the interval 614–837 (PRSGILNIAT…ECLRLTDEFR (224 aa)). Fe cation contacts are provided by His-658, Asp-660, and His-805.

The protein belongs to the JARID1 histone demethylase family. Fe(2+) is required as a cofactor. In terms of tissue distribution, expressed in inflorescences, roots, siliques, leaves and stems.

Its subcellular location is the nucleus. In terms of biological role, may function as histone H3 lysine demethylase and be involved in regulation of gene expression. This chain is Lysine-specific demethylase JMJ26, found in Arabidopsis thaliana (Mouse-ear cress).